We begin with the raw amino-acid sequence, 445 residues long: Phosphoglucosamine mutase (445 aa).

Residue Ser-99 is the Phosphoserine intermediate of the active site. Mg(2+)-binding residues include Ser-99, Asp-242, Asp-244, and Asp-246. At Ser-99 the chain carries Phosphoserine.

This sequence belongs to the phosphohexose mutase family. It depends on Mg(2+) as a cofactor. Activated by phosphorylation.

It carries out the reaction alpha-D-glucosamine 1-phosphate = D-glucosamine 6-phosphate. Catalyzes the conversion of glucosamine-6-phosphate to glucosamine-1-phosphate. The sequence is that of Phosphoglucosamine mutase from Campylobacter jejuni (strain RM1221).